Reading from the N-terminus, the 745-residue chain is MEKDVVSLEDALEHGLTKEEFQKIQEILGRIPNSTELGIFSAMWSEHCSYKNSILKLKTLPTTSDKLLAKAGEENAGAMDIGDGLAVVFKIESHNHPTAVEPYQGAATGVGGIMRDIFTMGARPIVSLNSLRFGNPDEPKNKYLLSRAVKGIGDYGNSLGIAVSGGELFIDECFSKNPLVNAMTVGVVRHDQMASATTGGQVGNSVYIVGATTGRDGIHGASFASKDLSKESESKRSAVQVGDPFMEKLLMEASLEAIQKGLLVGIQDMGAAGISCATSEMSAKGKTGMKIDLDLVPFRETGMNAYEAMLSESQERMLVVPKKGKESELVSIFEKWNLNAVKIGEVTADGMIEIYMGGKLKAKIPAESLVLGGGAPRYERETKRPSYLDAVKTWKPDEIPDVTKGANSKEILLKILSSWNVCSRKPITEQYDSEVGLVKLIGPGLDGGLSAIPGTNKALATATDCNSRYTYLDPYKGAEFAVCEAARNVYVTGATPYGVTNNLNFANPYIPENYYIFSECIRGMGDACRFLGLPVTGGNVSFYNESPEGPIFPTPTIGMVGILENKEKLIFNFPKEIGVELAVLGNFRPSLGGSEYLKKIHGQINGSIPELDIKEELELCKLILSLNESRILKSAKDLSLGGIAVALSKTVLFSGLGIESDLTSLRRNRLDLTLFGESSTAVLVGFDSLSKEDIRKQTEAYGLKFYPIGKTNSSGILEIKDAEIKISFQELSGPYEKGLEAVFAL.

The active site involves His-47. ATP is bound by residues Tyr-50 and Lys-90. Glu-92 provides a ligand contact to Mg(2+). Substrate is bound by residues Ser-93–His-96 and Arg-115. Residue His-94 is the Proton acceptor of the active site. Residue Asp-116 coordinates Mg(2+). Substrate is bound at residue Gln-240. Asp-268 contacts Mg(2+). Glu-312–Gln-314 lines the substrate pocket. Positions 501 and 538 each coordinate ATP. Asn-539 provides a ligand contact to Mg(2+). Ser-541 is a binding site for substrate.

The protein belongs to the FGAMS family. In terms of assembly, monomer. Part of the FGAM synthase complex composed of 1 PurL, 1 PurQ and 2 PurS subunits.

It localises to the cytoplasm. The enzyme catalyses N(2)-formyl-N(1)-(5-phospho-beta-D-ribosyl)glycinamide + L-glutamine + ATP + H2O = 2-formamido-N(1)-(5-O-phospho-beta-D-ribosyl)acetamidine + L-glutamate + ADP + phosphate + H(+). It participates in purine metabolism; IMP biosynthesis via de novo pathway; 5-amino-1-(5-phospho-D-ribosyl)imidazole from N(2)-formyl-N(1)-(5-phospho-D-ribosyl)glycinamide: step 1/2. Its function is as follows. Part of the phosphoribosylformylglycinamidine synthase complex involved in the purines biosynthetic pathway. Catalyzes the ATP-dependent conversion of formylglycinamide ribonucleotide (FGAR) and glutamine to yield formylglycinamidine ribonucleotide (FGAM) and glutamate. The FGAM synthase complex is composed of three subunits. PurQ produces an ammonia molecule by converting glutamine to glutamate. PurL transfers the ammonia molecule to FGAR to form FGAM in an ATP-dependent manner. PurS interacts with PurQ and PurL and is thought to assist in the transfer of the ammonia molecule from PurQ to PurL. This Leptospira interrogans serogroup Icterohaemorrhagiae serovar copenhageni (strain Fiocruz L1-130) protein is Phosphoribosylformylglycinamidine synthase subunit PurL.